The primary structure comprises 248 residues: Probable transcriptional regulatory protein NGR_c27950 (248 aa).

Belongs to the TACO1 family.

It localises to the cytoplasm. This Sinorhizobium fredii (strain NBRC 101917 / NGR234) protein is Probable transcriptional regulatory protein NGR_c27950.